Reading from the N-terminus, the 4621-residue chain is MFRIGRRQLWKQSVTRVLTQRLKEEKEAKRARLDGRHDYLFAIVASCLDLNKPEVEDALLEGNQIERMDQLFAVGGLRHLMFYYQDVEGAEAGHCGSSGGVNPASGKMKKPKVFVTEGKDVALMGACVFFIRSDPSKAITPENIHREVSFNTLDTADGGLLNSVRRLLSDIFIPALRASSHGWGELEGLQDASSIRQEFLSSLEGFVGILSGAQNSLKEKVNLQKCDIIELKSLKEPTDYLALASNPETVEKVECCMRVWIKQMEQILAENSQLRKEADDVGPRAELEHWKQRLSRFNYLLDQLKSPDVKAALALLAAAKSKLLKVWRDTDIRITDAANEAKDNVKYLYTLEKCCDPLYSSDPVTMIDAIPTLINAIKMVYSISHYYNTSEKITSLFVKVTNQMISACKAHITNNGTATIWSQPQEIVMQKIAAVIKLKQGYQSCFQETKQKLKQNPSEKQFDFSEMYIFGKFETFHRRLAKIMDIFTTFKTYSVLQDSKIEGLEDMATKYQDIVAAIKKKEYNFLDQREMDFDQDYEEFCKRINELHNDLQRFMDITFEKIPSTRQALSTLKKFERLNIPNLGIEEKYQIIFQNFATDIDTISKLYTKQKYDPPLARNQPPIAGKILWARQLFHRLEQPMQLFQQHPFVLRTAEAKPVIRSYNRIAKVLLEFEVLYHRAWLQQIEEIHAGLEASLLVKAPGTGELFVNFDPQILVLFRETQCMSQLGLPVSPFAAALFQKRDMFKKNFSDMKMMLSEYERVKLKMPPAIEQLMFPHLARVDEALQPGLAVLTWTSLNIGGYLENAFAKIKDLELLLDRVNDLIEFRIHAILEEMSSMALCQLPQDDPLTCEEFLQMTKDLCVSGAQLLHFKSSLVEEAVNELINMLLDVDVPPEEAAENVCHENASPSGNTSGRREGHSEALASSFNAGASSLPLTATARKKKETEVLEEARELLSHFNHQNTDALLKVTRNTLEAIRRRIHFSHMINFRDSNDASKAKQNHLPIFRASVTLAIPNIAMTPALEDIQQTLNKAVECIISVPKGVRQWSSELLSKRKMHERKMAAVKNNEDSDSDAEVEENELQETLEIASINLPIPVQTQNYYKNISDNKEIVKLVSVLSTVISSTKKEVITSMDRFKRYNHIWQKEKEDTIMTFIAQNPLLPEFESRILYFQSLEQEINAEPEYIRVGSIALYTADLKLSLTAETKAWMAVIGRHCNRKYRAEMENILTVVEESQKKLSRPIKDLDDIRIAMAALKEIREQQISTDFQVGPIEESYALLNKYGLLVAKEEMDKVDTLRYAWEKLLARASDVQNELGALQPSFRKELISTVEVFLQDCQQFYLDYDLNGPMASGLKPQEASGRLIIFQNQFDNIYRKYITYTGGEELFGLPVTPYPQLLEIKRQLNLLQKIYSLYNNVIETVNSYQDTLWSDVNIEKINNELLEFQNRCRKLPRALKDWQAFLDLKKTIDDFSECCPLLEYMASNAMVERHWQRITALTGHSLDVGNETFKLRNIMEAPLLKYKEEIEDICISAVKERDIEQKLRQVINEWDNKTLTFSGFKTRGELLLRGDSTSEVIASMEDSLMLLGSLLSNRYNMPFKAQIQKWVQCLSNSTDIIENWMTVQNLWIYLEAVFVGGDIAKQLPKEAKRFSNIDKSWVKIMTRAHEIPNVVQCCVGDETMGQLLPHLLDQLEICQKSLTGYLEKKRLCFPRFFFVSDPALLEILGQASDSHTIQAHLLNVFDNIKTVKFHDKIYDRILSISSREGETIELDKPVMAEGNVEVWLNSLLEESQSSLHLVIRQAAANIQEPGFQLIEFLSSFPAQVGLLGIQMLWTRDSEEALRNAKFDKKIMQKTNQAFLELLNMLIEITTKDLSSMERVKYETLITIHVHQRDIFDDLCHMHVKSPTDFEWLKQCRFYFKEDSDKTMIHITDVAFIYQNEFLGCTDRLVITPLTDRCYITLAQALGMSMGGAPAGPAGTGKTETTKDMGRCLGKYVVVFNCSDQMDFRGLGRIFKGLAQSGSWGCFDEFNRIDLPVLSVAAQQISIILTCKKEHKKSFIFTDGDNVTMNPEFGLFLTMNPGYAGRQELPENLKINFRSVAMMVPDRQIIIRVKLASCGFIDNVVLARKFFTLYQLCEEQLSKQVHYDFGLRNILSVLRTLGAAKRASPTDTESTIVMRVLRDMNLSKLIDEDEPLFLSLIEDLFPNILLDKAGYPELETAISKQVEEAGLINHPPWKLKVIQLFETQRVRHGMMTLGPSGSGKTTCIHTLMKAMTDCGKPHREMRMNPKAITAPQMFGRLDVATNDWTDGIFSTLWRKTLKAKKGEHIWIVLDGPVDAIWIENLNSVLDDNKTLTLANGDRIPMAPNCKIVFEPHNIDNASPATVSRNGMVFMSSSVLDWSPILEGFLKRRSPQEAEILRQLYAETFPDLYRFSIQNLEFKMEVLEAFVITQSTHMLQGLIPPKEQAGEVDPEHLGRLFVFAMMWSVGAVLELEGRRRMELWLRSREGPTLHLPQLTDAGDTMFDYYVAPNGTWRHWSLCTPEYVYPPDTTPEYGSILVPNVDNVRTDFLIKTIAKQGKAVLLIGEQGTAKTVIIKGFMSKFDPESHMVKNLNFSSATTPVMFQRTIESYVDKRMGTTYGPPAGKKMAVFIDDLNMPVINEWGDQVTNEIVRQLMEQSGFYNLEKPGEFTSIVDIQFLAAMIHPGGGRNDIPQRLKRQFSIFNCTLPSDASMDKIFGVIGAGYYCAQRGFSEEVQDALIKLVPLTRRLWQMTKLKMLPTPAKFHYVFNLRDLSRIWQGMLNITSEVIKDTDELLRLWKHECKRVIADRFSMSSDVTWFDKAVVSLVEEEFGEEKAPVVDCGVDAYFVDFLRDAPEATGETPEEADAEMPKLYEPIASLNHLRERLSVFLQLYNESIRGTGMDMVFFIDAMVHLVKISRVIRTPRGNALLVGVGGSGKQSLTRLASFIAGYTSFQITLTRSYNTSNLMEDLKVLYRTAGQQGKGITFIFTDNEIKEESFLEYMNNVLSSGEVSNLFARDEIDEINSDLTPIMKKEHPRRPPTNDNLYEYFMSRVRGNLHIVLCFSPVGEKFRNRALKFPALISGCTIDWFSRWPKDALVAVSEHFLSSYTIDCTAEIKKELVQCMGSFQDGVAEKCADYFQRFRRSTHVTPKSYLSFIQGYKFIYEEKHMEVQSLANRMNTGLEKLKEASESVAALSKELAGKEKELQVANEKADTVLKEVTMKAQAAEKVKAEVQKVKDKAQAIVDSISKDKAIAEEKLEAAKPALEEAEAALQTIKPSDIATVRTLGRPPHLIMRIMDCVLLLFQRRVNAVKIDVDKGCTMPSWQESLKLMTAGNFLQNLQQFPKDTINEEVIEFLNPYFEMSDYNIETAKRVCGNVAGLCSWTKAMASFFSINKEVLPLKANLIVQENRHILAMQDLQKAQAELDAKQAELDVVQAEYEQAMAEKQTLLEDADRCRHKMQTASTLISGLAGEKERWTEQSKEFAAQTKRLVGDVLLATAFLSYSGPFNQEFRDLLLHDWKKEMKARKIPFGNGLNLNEMLIDAPTISEWNLQGLPNDDLSIQNGIIVTKASRYPLLIDPQTQGKIWIKNKESQNELQITSLNHKYFRNHLEDSLSLGRPLLIEDVGEELDPALDNVLEKNFIKTGSTFKVKVGDKEVDVMDGFKLYITTKLPNPAYTPEISARTSIIDFTVTVKGLEDQLLGRVILTEKQELEKERTHLLEDVTANKRRMKELEDNLLYRLTSTQGSLVEDESLIIVLSNTKKTAEEVTQKLEISGETEIQINSAREEYRPVATRGSILYFLITEMRLVNEMYQTSLRQFLGLFDLSLARSVKSPITSKRIANIIEHMTYEVFKYAARGLYEEHKFLFTLLLTLKIDIQRNLVKHEEFLTLIKGGASLDLKACPPKPSKWILDMTWLNLVELSKLKQFSDILDQISRNEKMWRVWFDKENPEEEPLPNAYDKSLDCFRRLLLIRSWCPDRTIAQARKYIMDSMGENYAEGVILDLEKTWEESDPRTPLICLLSMGSDPTDSIIALGKRLKIETRYVSMGQGQEVHARKLLHQTMANGGWVLLQNCHLGLDFLDELMDVVTETETVHDTFRLWITTEVHKQFPITLLQMSIKFANEPPQGLRAGLRRTYGGVSQDLLDVSVGAQWKPMLYAVAFLHSTVQERRKFGPLGWNIPYEFNQADFNATVQFIQNHLDDMDVKKGVSWTTVRYMIGEIQYGGRVTDDYDKRLLNTFAKVWFSENMFGPDFTFYQGYNIPKCSTVDGYLQYIQSLPAYDSPEVFGLHPNADITYQSKLAKDVLDTILGIQPKDSSGGGDETREAVVARLADDMLEKLPEDYSPFEVKERLQKMGPFQPMNIFLRQEIDRMQRVLSLVRSTLTELKLAVDGTIIMSENLRDALDCMFDARIPARWKKASWVSSTLGFWFTELLERNCQFTSWVSNGRPHCFWMTGFFNPQGFLTAMRQEITRANKGWALDNMVLCNEVTKFMKDDISAPPTEGVYVYGLYLEGAGWDKRNMKLIESKPKVLFELMPVIRIFAENNTARDPRLYCCPIYKKPVRTDLNYIAAVDLKTAQAPEHWVLRGVALLCDVK.

The stem stretch occupies residues 1 to 1938 (MFRIGRRQLW…MIHITDVAFI (1938 aa)). Coiled-coil stretches lie at residues 260-305 (WIKQ…DQLK) and 803-825 (LENA…DLIE). A disordered region spans residues 901-921 (VCHENASPSGNTSGRREGHSE). Coiled coils occupy residues 1065-1094 (AVKN…SINL) and 1433-1462 (DVNI…DWQA). AAA regions lie at residues 1939–2161 (YQNE…VLRT), 2221–2440 (TAIS…IQNL), 2547–2800 (VYPP…IWQG), and 2913–3167 (LYNE…FRRS). ATP is bound by residues 1977–1984 (GPAGTGKT) and 2259–2266 (GPSGSGKT). The segment at 3182-3479 (YKFIYEEKHM…QTLLEDADRC (298 aa)) is stalk. 3 coiled-coil regions span residues 3186–3299 (YEEK…QTIK), 3423–3490 (LKAN…STLI), and 3729–3814 (ILTE…EEYR). AAA regions lie at residues 3564–3794 (LIDA…EVTQ) and 4009–4223 (ARKY…FIQN). Positions 4389 to 4417 (FLRQEIDRMQRVLSLVRSTLTELKLAVDG) form a coiled coil.

This sequence belongs to the dynein heavy chain family. As to quaternary structure, interacts with DNAL1. Consists of at least two heavy chains and a number of intermediate and light chains. In terms of tissue distribution, strongly expressed in lung and kidney and weaker expression seen in brain, heart and testis. In the brain, expressed in ependymal cells lining the brain ventricles and the aqueduct.

The protein resides in the cytoplasm. It localises to the cytoskeleton. Its subcellular location is the cilium axoneme. Force generating protein of respiratory cilia. Produces force towards the minus ends of microtubules. Dynein has ATPase activity; the force-producing power stroke is thought to occur on release of ADP. Required for structural and functional integrity of the cilia of ependymal cells lining the brain ventricles. The sequence is that of Dynein axonemal heavy chain 5 from Mus musculus (Mouse).